A 695-amino-acid chain; its full sequence is Translation initiation factor IF-2 (695 aa).

Residues 60–92 (KKSASSKKKTEKEVEEEEIETPKKKKKQEEKIP) are disordered. A tr-type G domain is found at 184 to 358 (QRPPVVTVMG…EMSEIKCIPT (175 aa)). The G1 stretch occupies residues 193–200 (GHVDHGKT). Position 193–200 (193–200 (GHVDHGKT)) interacts with GTP. The segment at 218–222 (GITQS) is G2. A G3 region spans residues 239–242 (DTPG). GTP is bound by residues 239 to 243 (DTPGH) and 293 to 296 (NKID). The tract at residues 293–296 (NKID) is G4. Positions 330 to 332 (SAK) are G5.

It belongs to the TRAFAC class translation factor GTPase superfamily. Classic translation factor GTPase family. IF-2 subfamily.

It localises to the cytoplasm. Functionally, one of the essential components for the initiation of protein synthesis. Protects formylmethionyl-tRNA from spontaneous hydrolysis and promotes its binding to the 30S ribosomal subunits. Also involved in the hydrolysis of GTP during the formation of the 70S ribosomal complex. This Kosmotoga olearia (strain ATCC BAA-1733 / DSM 21960 / TBF 19.5.1) protein is Translation initiation factor IF-2.